A 413-amino-acid chain; its full sequence is Hemocyanin type 2 unit e (413 aa).

Asn17 carries an N-linked (GlcNAc...) (high mannose) asparagine glycan. His49 serves as a coordination point for Cu cation. An intrachain disulfide couples Cys55 to Cys66. A cross-link (2'-(S-cysteinyl)-histidine (Cys-His)) is located at residues 67–69 (CVH). Cu cation contacts are provided by His69 and His78. N-linked (GlcNAc...) (high mannose) asparagine glycosylation occurs at Asn127. Disulfide bonds link Cys179–Cys246 and Cys336–Cys342. Cu cation is bound by residues His189, His193, and His220.

Belongs to the tyrosinase family. Hemocyanin subfamily. Decamers of large identical subunits, each containing 8 globular oxygen-binding functional units. It depends on Cu(2+) as a cofactor. As to expression, hemolymph.

The protein localises to the secreted. It is found in the extracellular space. In terms of biological role, hemocyanins are copper-containing oxygen carriers occurring freely dissolved in the hemolymph of many mollusks and arthropods. The protein is Hemocyanin type 2 unit e of Rapana venosa (Veined rapa whelk).